We begin with the raw amino-acid sequence, 543 residues long: Cysteine/serine-rich nuclear protein 2 (543 aa).

An N-acetylmethionine modification is found at M1. Disordered regions lie at residues 1-51 (MDAF…SFTP), 281-305 (KRQV…LTGA), and 488-543 (DCNP…PLAV). Positions 31–40 (SSDSADSCDS) are enriched in low complexity. 2 stretches are compositionally biased toward polar residues: residues 42–51 (NPPTTASFTP) and 296–305 (PTASCSLTGA).

Belongs to the AXUD1 family.

It is found in the nucleus. Functionally, binds to the consensus sequence 5'-AGAGTG-3' and has transcriptional activator activity. May play a role in apoptosis. The polypeptide is Cysteine/serine-rich nuclear protein 2 (CSRNP2) (Homo sapiens (Human)).